Reading from the N-terminus, the 188-residue chain is uncharacterized protein (188 aa).

The helical transmembrane segment at 121–139 threads the bilayer; that stretch reads IWLYGGASLITTFINLGLV.

The protein to B.subtilis YwjB.

The protein localises to the membrane. This is an uncharacterized protein from Bacillus subtilis (strain 168).